The primary structure comprises 242 residues: Arginine transport ATP-binding protein ArtP (242 aa).

The 239-residue stretch at 3-241 folds into the ABC transporter domain; it reads IQLNGINCFY…QTEAFKNYLS (239 aa). 35–42 lines the ATP pocket; it reads GPSGAGKS.

The protein belongs to the ABC transporter superfamily. The complex is composed of two ATP-binding proteins (ArtP), two transmembrane proteins (ArtM and ArtQ) and two solute-binding proteins (ArtJ and ArtI).

It is found in the cell inner membrane. It carries out the reaction a polar amino acid(out) + ATP + H2O = a polar amino acid(in) + ADP + phosphate + H(+). It catalyses the reaction L-arginine(out) + ATP + H2O = L-arginine(in) + ADP + phosphate + H(+). Part of the ABC transporter complex ArtPIQMJ involved in arginine transport. Probably responsible for energy coupling to the transport system. The polypeptide is Arginine transport ATP-binding protein ArtP (artP) (Escherichia coli O157:H7).